A 123-amino-acid polypeptide reads, in one-letter code: Large ribosomal subunit protein bL12 (123 aa).

Belongs to the bacterial ribosomal protein bL12 family. Homodimer. Part of the ribosomal stalk of the 50S ribosomal subunit. Forms a multimeric L10(L12)X complex, where L10 forms an elongated spine to which 2 to 4 L12 dimers bind in a sequential fashion. Binds GTP-bound translation factors.

Functionally, forms part of the ribosomal stalk which helps the ribosome interact with GTP-bound translation factors. Is thus essential for accurate translation. In Clostridium botulinum (strain ATCC 19397 / Type A), this protein is Large ribosomal subunit protein bL12.